The sequence spans 92 residues: Signal recognition particle 19 kDa protein (92 aa).

Belongs to the SRP19 family. In terms of assembly, part of the signal recognition particle protein translocation system, which is composed of SRP and FtsY. Archaeal SRP consists of a 7S RNA molecule of 300 nucleotides and two protein subunits: SRP54 and SRP19.

It is found in the cytoplasm. Involved in targeting and insertion of nascent membrane proteins into the cytoplasmic membrane. Binds directly to 7S RNA and mediates binding of the 54 kDa subunit of the SRP. This chain is Signal recognition particle 19 kDa protein, found in Halobacterium salinarum (strain ATCC 29341 / DSM 671 / R1).